The primary structure comprises 147 residues: Large ribosomal subunit protein mL40 (147 aa).

A mitochondrion-targeting transit peptide spans 1 to 26 (MLAQTFKKPHRAVLEQVSGTTVFIRN).

The protein belongs to the mitochondrion-specific ribosomal protein mL40 family. Component of the mitochondrial large ribosomal subunit (mt-LSU). Mature yeast 74S mitochondrial ribosomes consist of a small (37S) and a large (54S) subunit. The 37S small subunit contains a 15S ribosomal RNA (15S mt-rRNA) and 34 different proteins. The 54S large subunit contains a 21S rRNA (21S mt-rRNA) and 46 different proteins.

The protein resides in the mitochondrion. In terms of biological role, component of the mitochondrial ribosome (mitoribosome), a dedicated translation machinery responsible for the synthesis of mitochondrial genome-encoded proteins, including at least some of the essential transmembrane subunits of the mitochondrial respiratory chain. The mitoribosomes are attached to the mitochondrial inner membrane and translation products are cotranslationally integrated into the membrane. This Saccharomyces cerevisiae (strain ATCC 204508 / S288c) (Baker's yeast) protein is Large ribosomal subunit protein mL40 (MRPL28).